Consider the following 547-residue polypeptide: Chaperonin GroEL (547 aa).

Residues 29–32 (TLGP), 86–90 (DGTTT), Gly413, and Asp498 contribute to the ATP site.

This sequence belongs to the chaperonin (HSP60) family. In terms of assembly, forms a cylinder of 14 subunits composed of two heptameric rings stacked back-to-back. Interacts with the co-chaperonin GroES.

Its subcellular location is the cytoplasm. It catalyses the reaction ATP + H2O + a folded polypeptide = ADP + phosphate + an unfolded polypeptide.. Functionally, together with its co-chaperonin GroES, plays an essential role in assisting protein folding. The GroEL-GroES system forms a nano-cage that allows encapsulation of the non-native substrate proteins and provides a physical environment optimized to promote and accelerate protein folding. The protein is Chaperonin GroEL of Herpetosiphon aurantiacus (strain ATCC 23779 / DSM 785 / 114-95).